Reading from the N-terminus, the 518-residue chain is Membrane-bound lytic murein transglycosylase F (518 aa).

An N-terminal signal peptide occupies residues methionine 1 to alanine 21. The interval leucine 22–glycine 269 is non-LT domain. Residues aspartate 270–asparagine 518 are LT domain. Residue glutamate 314 is part of the active site.

This sequence in the N-terminal section; belongs to the bacterial solute-binding protein 3 family. It in the C-terminal section; belongs to the transglycosylase Slt family.

It is found in the cell outer membrane. The catalysed reaction is Exolytic cleavage of the (1-&gt;4)-beta-glycosidic linkage between N-acetylmuramic acid (MurNAc) and N-acetylglucosamine (GlcNAc) residues in peptidoglycan, from either the reducing or the non-reducing ends of the peptidoglycan chains, with concomitant formation of a 1,6-anhydrobond in the MurNAc residue.. Murein-degrading enzyme that degrades murein glycan strands and insoluble, high-molecular weight murein sacculi, with the concomitant formation of a 1,6-anhydromuramoyl product. Lytic transglycosylases (LTs) play an integral role in the metabolism of the peptidoglycan (PG) sacculus. Their lytic action creates space within the PG sacculus to allow for its expansion as well as for the insertion of various structures such as secretion systems and flagella. The sequence is that of Membrane-bound lytic murein transglycosylase F from Escherichia coli O6:H1 (strain CFT073 / ATCC 700928 / UPEC).